We begin with the raw amino-acid sequence, 655 residues long: Tumor necrosis factor receptor superfamily member 21 (655 aa).

The signal sequence occupies residues 1–41; the sequence is MGTSASSITALASCSRIAGQVGATMVAGSLLLLGFLSTITA. The Extracellular segment spans residues 42–349; it reads QPEQKTLSLT…PHKHFDINEH (308 aa). TNFR-Cys repeat units lie at residues 50 to 88, 90 to 131, 133 to 167, and 170 to 211; these read LTGT…LRVC, SCPS…DREC, CPPG…EDVR, and QCAR…DNVC. 9 cysteine pairs are disulfide-bonded: cysteine 67-cysteine 80, cysteine 70-cysteine 88, cysteine 91-cysteine 106, cysteine 109-cysteine 123, cysteine 113-cysteine 131, cysteine 133-cysteine 144, cysteine 150-cysteine 168, cysteine 171-cysteine 186, and cysteine 192-cysteine 211. Residue asparagine 82 is glycosylated (N-linked (GlcNAc...) asparagine). Disordered stretches follow at residues 214-306 and 318-338; these read HLSS…GPHH and EATG…HPRQ. Residues 216 to 225 show a composition bias toward low complexity; the sequence is SSSSTTPSSP. Composition is skewed to polar residues over residues 241–262 and 276–302; these read VPSS…TASV and PDNT…THQQ. 3 N-linked (GlcNAc...) asparagine glycosylation sites follow: asparagine 252, asparagine 278, and asparagine 289. A helical transmembrane segment spans residues 350-370; that stretch reads LPWMIVLFLLLVLVLIVVCSI. The S-palmitoyl cysteine moiety is linked to residue cysteine 368. Residues 371–655 lie on the Cytoplasmic side of the membrane; sequence RKSSRTLKKG…SVYSHLPDLL (285 aa). The Death domain maps to 415 to 498; it reads GIDILKLVAA…DVVEKIRGLM (84 aa).

In terms of assembly, associates with TRADD. Interacts with NGFR. Interacts with CASP8. In terms of processing, oxidized in response to reactive oxygen species (ROS), leading to endocytosis. As to expression, detected in brain (at protein level). Detected in corpus callosum oligodendrocytes. Detected in embryonic and adult brain.

It localises to the cell membrane. In terms of biological role, promotes apoptosis, possibly via a pathway that involves the activation of NF-kappa-B. Can also promote apoptosis mediated by BAX and by the release of cytochrome c from the mitochondria into the cytoplasm. Trophic-factor deprivation triggers the cleavage of surface APP by beta-secretase to release sAPP-beta which is further cleaved to release an N-terminal fragment of APP (N-APP). Negatively regulates oligodendrocyte survival, maturation and myelination. Plays a role in signaling cascades triggered by stimulation of T-cell receptors, in the adaptive immune response and in the regulation of T-cell differentiation and proliferation. Negatively regulates T-cell responses and the release of cytokines such as IL4, IL5, IL10, IL13 and IFNG by Th2 cells. Negatively regulates the production of IgG, IgM and IgM in response to antigens. May inhibit the activation of JNK in response to T-cell stimulation. Also acts as a regulator of pyroptosis: recruits CASP8 in response to reactive oxygen species (ROS) and subsequent oxidation, leading to activation of GSDMC. This is Tumor necrosis factor receptor superfamily member 21 (Tnfrsf21) from Rattus norvegicus (Rat).